We begin with the raw amino-acid sequence, 453 residues long: MPPRTAAERGGRRKSVKAPPPVDPLVELTTLESVHDALAKAERLRNYFQVERDKVNDFWTITKGEVETYRNRLFNAEASIEELERSHQVEMKVYKQRVRHLIYERKKKAQACQDESDRLLREAEDRHLQRMNEIQAKLQQQDQQLRAAAADHEMNVYEKRDSHSYMVTVTKTQSHEKELARLQVSCEAKLKVLRDELELRRRAEIHEIEERKNEHINALIKQHEEKFHEMKTYYNQITTNNLEIIHSLKEEIAQMKQNDEHNETLMYDIDRENQNLVAPLEEAQREVAELQQKRKQNEQNKRGLEVTRVKLRSLREEIRRQREEHQALEERYACVHREREELKGKFESALRQAVMVVEERNEVLQQKLIESHALVEERDVQLEGVLRAMNLEPKTLELIATEVDEWLQRKNQLIKDLHFELKKGEKLYSATLLEMERRCQTANIASLPRSNFE.

Basic and acidic residues predominate over residues 1–10; that stretch reads MPPRTAAERG. Positions 1–22 are disordered; sequence MPPRTAAERGGRRKSVKAPPPV. Coiled coils occupy residues 60-156 and 185-377; these read TITK…EMNV and SCEA…LVEE.

This sequence belongs to the DRC4 family.

It localises to the cytoplasm. The protein localises to the cytoskeleton. The protein resides in the cell projection. It is found in the cilium. Its subcellular location is the flagellum. Cytoskeletal linker that plays a central role in the flagellum cell motility. Required for directional cell motility. Plays a role as part of a dynein regulatory system that regulates flagellar beat in response to signals from the central pair apparatus and radial spokes in procyclic cells. Also plays an essential role in the bloodstream form of the trypanosomes as its silencing is lethal for the circulating form. The polypeptide is Trypanin (Trypanosoma brucei rhodesiense).